The chain runs to 326 residues: ATP phosphoribosyltransferase regulatory subunit (326 aa).

It belongs to the class-II aminoacyl-tRNA synthetase family. HisZ subfamily. As to quaternary structure, heteromultimer composed of HisG and HisZ subunits.

The protein localises to the cytoplasm. It participates in amino-acid biosynthesis; L-histidine biosynthesis; L-histidine from 5-phospho-alpha-D-ribose 1-diphosphate: step 1/9. Required for the first step of histidine biosynthesis. May allow the feedback regulation of ATP phosphoribosyltransferase activity by histidine. The protein is ATP phosphoribosyltransferase regulatory subunit of Streptococcus thermophilus (strain ATCC BAA-491 / LMD-9).